Here is a 481-residue protein sequence, read N- to C-terminus: Tetratricopeptide repeat protein 29 (481 aa).

Over residues methionine 1–threonine 18 the composition is skewed to low complexity. Residues methionine 1 to lysine 53 form a disordered region. 6 TPR repeats span residues cysteine 191–serine 224, glutamine 231–leucine 264, valine 271–valine 310, alanine 317–alanine 350, lysine 357–alanine 390, and tyrosine 397–leucine 430.

Interacts with TAX-1.

It localises to the cytoplasm. The protein localises to the cytoskeleton. It is found in the flagellum axoneme. Axonemal protein which is implicated in axonemal and/or peri-axonemal structure assembly and regulates flagellum assembly and beating. This Trypanosoma brucei brucei (strain 927/4 GUTat10.1) protein is Tetratricopeptide repeat protein 29.